A 346-amino-acid polypeptide reads, in one-letter code: Glycosyltransferase 1 domain-containing protein 1 (346 aa).

A signal peptide spans 1 to 16; it reads MRLLFLAVLRPHTGNA.

It belongs to the glycosyltransferase group 1 family. Glycosyltransferase 4 subfamily.

It is found in the secreted. This chain is Glycosyltransferase 1 domain-containing protein 1 (GLT1D1), found in Pongo abelii (Sumatran orangutan).